Here is a 245-residue protein sequence, read N- to C-terminus: Galectin-3 (245 aa).

The disordered stretch occupies residues 1–30 (MADGFSLNDALAGSGNPNPQGWPGAWGNQP). N-acetylalanine is present on alanine 2. A Phosphoserine; by CK1 modification is found at serine 6. Repeat copies occupy residues 35 to 43 (YPGASYPGA), 44 to 52 (YPGQAPPGA), 53 to 61 (YPGQAPPGA), and 62 to 70 (YPGPTAPGA). The segment at 35-99 (YPGASYPGAY…PSAPGAYPAA (65 aa)) is 7 X 9 AA tandem repeats of Y-P-G-X(3)-P-[GS]-A. Positions 47–68 (QAPPGAYPGQAPPGAYPGPTAP) are disordered. The stretch at 71–78 (YPGPAPGA) is one 5; approximate repeat. The 6; approximate repeat unit spans residues 79-88 (YPGQPGASGA). One copy of the 7; approximate repeat lies at 89–99 (YPSAPGAYPAA). The region spanning 113-243 (YKLPLAGGVM…DITLTSAAPT (131 aa)) is the Galectin domain. 176 to 182 (WGREERQ) serves as a coordination point for a beta-D-galactoside. Position 183 is a phosphoserine (serine 183). The Nuclear export signal signature appears at 221 to 236 (KNLREINQMEISGDIT).

Probably forms homo- or heterodimers. Interacts with DMBT1. Interacts with CD6 and ALCAM. Forms a complex with the ITGA3, ITGB1 and CSPG4. Interacts with LGALS3BP, LYPD3, ZFTRAF1 and UACA. Interacts with TRIM16; this interaction mediates autophagy of damage endomembranes. Interacts with cargo receptor TMED10; the interaction mediates the translocation from the cytoplasm into the ERGIC (endoplasmic reticulum-Golgi intermediate compartment) and thereby secretion. Interacts with and inhibits by binding NCR3/NKp30.

It localises to the cytoplasm. The protein localises to the nucleus. The protein resides in the secreted. Galactose-specific lectin which binds IgE. May mediate with the alpha-3, beta-1 integrin the stimulation by CSPG4 of endothelial cells migration. Together with DMBT1, required for terminal differentiation of columnar epithelial cells during early embryogenesis. In the nucleus: acts as a pre-mRNA splicing factor. Involved in acute inflammatory responses including neutrophil activation and adhesion, chemoattraction of monocytes macrophages, opsonization of apoptotic neutrophils, and activation of mast cells. Together with TRIM16, coordinates the recognition of membrane damage with mobilization of the core autophagy regulators ATG16L1 and BECN1 in response to damaged endomembranes. When secreted, interacts with NK cell-activating receptor NCR3/NKp30 acting as an inhibitory ligand which antagonizes NK cell attack. The protein is Galectin-3 (LGALS3) of Cricetulus longicaudatus (Long-tailed dwarf hamster).